Here is a 539-residue protein sequence, read N- to C-terminus: Phosphoenolpyruvate carboxykinase (ATP) (539 aa).

Residues R64, Y206, and K212 each contribute to the substrate site. Residues K212, H231, and 247–255 (GLSGTGKTT) each bind ATP. K212 and H231 together coordinate Mn(2+). D268 provides a ligand contact to Mn(2+). Residues E296, R332, 448-449 (RI), and T454 contribute to the ATP site. R332 is a binding site for substrate.

This sequence belongs to the phosphoenolpyruvate carboxykinase (ATP) family. In terms of assembly, monomer. It depends on Mn(2+) as a cofactor.

It localises to the cytoplasm. It carries out the reaction oxaloacetate + ATP = phosphoenolpyruvate + ADP + CO2. The protein operates within carbohydrate biosynthesis; gluconeogenesis. Functionally, involved in the gluconeogenesis. Catalyzes the conversion of oxaloacetate (OAA) to phosphoenolpyruvate (PEP) through direct phosphoryl transfer between the nucleoside triphosphate and OAA. The polypeptide is Phosphoenolpyruvate carboxykinase (ATP) (Erwinia tasmaniensis (strain DSM 17950 / CFBP 7177 / CIP 109463 / NCPPB 4357 / Et1/99)).